The sequence spans 838 residues: Leucine--tRNA ligase 1 (838 aa).

Residues 40 to 51 (PYPSGAGLHVGH) carry the 'HIGH' region motif. Residues 608–612 (KMSKS) carry the 'KMSKS' region motif. Residue Lys611 coordinates ATP.

This sequence belongs to the class-I aminoacyl-tRNA synthetase family.

Its subcellular location is the cytoplasm. The enzyme catalyses tRNA(Leu) + L-leucine + ATP = L-leucyl-tRNA(Leu) + AMP + diphosphate. This is Leucine--tRNA ligase 1 from Rhizobium johnstonii (strain DSM 114642 / LMG 32736 / 3841) (Rhizobium leguminosarum bv. viciae).